A 218-amino-acid polypeptide reads, in one-letter code: GTP cyclohydrolase 1 (218 aa).

3 residues coordinate Zn(2+): cysteine 109, histidine 112, and cysteine 180.

The protein belongs to the GTP cyclohydrolase I family. In terms of assembly, toroid-shaped homodecamer, composed of two pentamers of five dimers.

The enzyme catalyses GTP + H2O = 7,8-dihydroneopterin 3'-triphosphate + formate + H(+). Its pathway is cofactor biosynthesis; 7,8-dihydroneopterin triphosphate biosynthesis; 7,8-dihydroneopterin triphosphate from GTP: step 1/1. This chain is GTP cyclohydrolase 1, found in Aeromonas hydrophila subsp. hydrophila (strain ATCC 7966 / DSM 30187 / BCRC 13018 / CCUG 14551 / JCM 1027 / KCTC 2358 / NCIMB 9240 / NCTC 8049).